Reading from the N-terminus, the 327-residue chain is Cytochrome c oxidase subunit 2 (327 aa).

Residues 1–23 (MEQIPASIWTLTAGVVVTLISFW) form the signal peptide. Transmembrane regions (helical) follow at residues 56–78 (LFLVVQGAIILFVIRYRRRAGEE) and 96–114 (AIPALIVIFLGIYSVDIFQ). Cu cation is bound by residues histidine 221, cysteine 255, cysteine 259, and histidine 263.

It belongs to the cytochrome c oxidase subunit 2 family. Cu cation serves as cofactor.

It is found in the cell membrane. It catalyses the reaction 4 Fe(II)-[cytochrome c] + O2 + 8 H(+)(in) = 4 Fe(III)-[cytochrome c] + 2 H2O + 4 H(+)(out). In terms of biological role, subunits I and II form the functional core of the enzyme complex. Electrons originating in cytochrome c are transferred via heme a and Cu(A) to the binuclear center formed by heme a3 and Cu(B). This chain is Cytochrome c oxidase subunit 2 (ctaC), found in Thermostichus vulcanus (Synechococcus vulcanus).